A 399-amino-acid polypeptide reads, in one-letter code: Elongation factor Tu (399 aa).

In terms of domain architecture, tr-type G spans 10-204 (KPHVNIGTIG…SVDESIPEPE (195 aa)). A G1 region spans residues 19–26 (GHVDHGKT). 19 to 26 (GHVDHGKT) contacts GTP. Residue T26 coordinates Mg(2+). The G2 stretch occupies residues 60-64 (GITIN). The interval 81–84 (DCPG) is G3. GTP is bound by residues 81-85 (DCPGH) and 136-139 (NKCD). Residues 136 to 139 (NKCD) form a G4 region. A G5 region spans residues 174–176 (SAL).

It belongs to the TRAFAC class translation factor GTPase superfamily. Classic translation factor GTPase family. EF-Tu/EF-1A subfamily. Monomer.

It is found in the cytoplasm. It carries out the reaction GTP + H2O = GDP + phosphate + H(+). Functionally, GTP hydrolase that promotes the GTP-dependent binding of aminoacyl-tRNA to the A-site of ribosomes during protein biosynthesis. The chain is Elongation factor Tu from Prochlorococcus marinus (strain MIT 9211).